Here is a 384-residue protein sequence, read N- to C-terminus: Glutamate 5-kinase (384 aa).

Position 24 (Lys-24) interacts with ATP. 3 residues coordinate substrate: Ser-64, Asp-149, and Asn-161. ATP contacts are provided by residues 181 to 182 and 223 to 229; these read TD and TGGMRTK. One can recognise a PUA domain in the interval 288–370; the sequence is PGAILIDAGA…RDIQTLLGYT (83 aa).

Belongs to the glutamate 5-kinase family.

It is found in the cytoplasm. The enzyme catalyses L-glutamate + ATP = L-glutamyl 5-phosphate + ADP. It functions in the pathway amino-acid biosynthesis; L-proline biosynthesis; L-glutamate 5-semialdehyde from L-glutamate: step 1/2. Its function is as follows. Catalyzes the transfer of a phosphate group to glutamate to form L-glutamate 5-phosphate. This chain is Glutamate 5-kinase, found in Xylella fastidiosa (strain M23).